Consider the following 496-residue polypeptide: Probable cytosol aminopeptidase (496 aa).

Mn(2+) contacts are provided by K258 and D263. K270 is a catalytic residue. D281, D340, and E342 together coordinate Mn(2+). R344 is a catalytic residue.

Belongs to the peptidase M17 family. Mn(2+) is required as a cofactor.

It localises to the cytoplasm. It carries out the reaction Release of an N-terminal amino acid, Xaa-|-Yaa-, in which Xaa is preferably Leu, but may be other amino acids including Pro although not Arg or Lys, and Yaa may be Pro. Amino acid amides and methyl esters are also readily hydrolyzed, but rates on arylamides are exceedingly low.. The enzyme catalyses Release of an N-terminal amino acid, preferentially leucine, but not glutamic or aspartic acids.. Presumably involved in the processing and regular turnover of intracellular proteins. Catalyzes the removal of unsubstituted N-terminal amino acids from various peptides. The sequence is that of Probable cytosol aminopeptidase from Helicobacter pylori (strain P12).